A 21-amino-acid chain; its full sequence is Major outer membrane protein (21 aa).

In terms of assembly, disulfide bond interactions within and between MOMP molecules and other components form high molecular-weight oligomers.

It localises to the cell outer membrane. In terms of biological role, structural rigidity of the outer membrane of elementary bodies and porin forming, permitting diffusion of solutes through the intracellular reticulate body membrane. In Actinobacillus suis, this protein is Major outer membrane protein.